A 263-amino-acid polypeptide reads, in one-letter code: Pyrrolysine synthase (263 aa).

The L-pyrrolysine site is built by leucine 8, valine 57, isoleucine 64, and alanine 107. Positions 155, 156, 175, 210, 228, 230, and 249 each coordinate NAD(+).

Belongs to the PylD family.

It catalyses the reaction (3R)-3-methyl-D-ornithyl-N(6)-L-lysine + NAD(+) = L-pyrrolysine + NH4(+) + NADH + 2 H(+). It participates in amino-acid biosynthesis; L-pyrrolysine biosynthesis. Its function is as follows. Catalyzes the ultimate step of the pyrrolysine biosynthesis pathway by converting the isopeptide (3R)-3-methyl-D-ornithyl-N(6)-L-lysine to the 22nd proteinogenic amino acid. Is able to use surrogate substrates such as (3R)-D-ornithyl-N(6)-L-lysine in vitro. In Methanosarcina barkeri (strain Fusaro / DSM 804), this protein is Pyrrolysine synthase.